The following is a 126-amino-acid chain: Large ribosomal subunit protein bL17 (126 aa).

This sequence belongs to the bacterial ribosomal protein bL17 family. Part of the 50S ribosomal subunit. Contacts protein L32.

The sequence is that of Large ribosomal subunit protein bL17 from Nitrosococcus oceani (strain ATCC 19707 / BCRC 17464 / JCM 30415 / NCIMB 11848 / C-107).